Here is a 501-residue protein sequence, read N- to C-terminus: ATP synthase subunit alpha (501 aa).

Position 169–176 (169–176) interacts with ATP; it reads GDRQTGKT.

This sequence belongs to the ATPase alpha/beta chains family. In terms of assembly, F-type ATPases have 2 components, CF(1) - the catalytic core - and CF(0) - the membrane proton channel. CF(1) has five subunits: alpha(3), beta(3), gamma(1), delta(1), epsilon(1). CF(0) has three main subunits: a(1), b(2) and c(9-12). The alpha and beta chains form an alternating ring which encloses part of the gamma chain. CF(1) is attached to CF(0) by a central stalk formed by the gamma and epsilon chains, while a peripheral stalk is formed by the delta and b chains.

It is found in the cell membrane. The catalysed reaction is ATP + H2O + 4 H(+)(in) = ADP + phosphate + 5 H(+)(out). Its function is as follows. Produces ATP from ADP in the presence of a proton gradient across the membrane. The alpha chain is a regulatory subunit. This is ATP synthase subunit alpha from Streptococcus pneumoniae serotype 4 (strain ATCC BAA-334 / TIGR4).